The primary structure comprises 155 residues: MKAVIQRVSEAGVKVDGRTVGAVERGILVLLGVEKGDSTKEADWLAEKIVNLRIFEDAAGKMNLSLLDIKGELLAVSQFTLAGNCSKGRRPSFDTAAPPEEAIQLYEYFVGKTWELGIPVQTGIFQADMKVSLVNDGPVTFILETPKNKERGTRS.

The short motif at 137-138 (GP) is the Gly-cisPro motif, important for rejection of L-amino acids element.

The protein belongs to the DTD family. As to quaternary structure, homodimer.

The protein resides in the cytoplasm. The catalysed reaction is glycyl-tRNA(Ala) + H2O = tRNA(Ala) + glycine + H(+). It catalyses the reaction a D-aminoacyl-tRNA + H2O = a tRNA + a D-alpha-amino acid + H(+). Functionally, an aminoacyl-tRNA editing enzyme that deacylates mischarged D-aminoacyl-tRNAs. Also deacylates mischarged glycyl-tRNA(Ala), protecting cells against glycine mischarging by AlaRS. Acts via tRNA-based rather than protein-based catalysis; rejects L-amino acids rather than detecting D-amino acids in the active site. By recycling D-aminoacyl-tRNA to D-amino acids and free tRNA molecules, this enzyme counteracts the toxicity associated with the formation of D-aminoacyl-tRNA entities in vivo and helps enforce protein L-homochirality. In Geotalea uraniireducens (strain Rf4) (Geobacter uraniireducens), this protein is D-aminoacyl-tRNA deacylase.